The chain runs to 141 residues: Cholinesterase (141 aa).

N-linked (GlcNAc...) asparagine glycosylation occurs at asparagine 39. A substrate-binding site is contributed by 49 to 50 (GG). Residue serine 131 is the Acyl-ester intermediate of the active site. Serine 131 is modified (phosphoserine).

Belongs to the type-B carboxylesterase/lipase family. As to quaternary structure, homotetramer; disulfide-linked. Dimer of dimers. As to expression, present in most cells except erythrocytes.

Its subcellular location is the secreted. The catalysed reaction is an acylcholine + H2O = a carboxylate + choline + H(+). In terms of biological role, esterase with broad substrate specificity. Contributes to the inactivation of the neurotransmitter acetylcholine. Can degrade neurotoxic organophosphate esters. The chain is Cholinesterase (BCHE) from Canis lupus familiaris (Dog).